A 207-amino-acid chain; its full sequence is Transcriptional regulatory protein RcsA (207 aa).

One can recognise an HTH luxR-type domain in the interval 131–196 (INLPTLSLSR…VIYHVVRLTD (66 aa)). A DNA-binding region (H-T-H motif) is located at residues 155–174 (TIQISDRMNIKAKTVSSHKG).

This sequence belongs to the RcsA family. Interacts with RcsB.

In terms of biological role, component of the Rcs signaling system, which controls transcription of numerous genes. Binds, with RcsB, to the RcsAB box to regulate expression of genes. This chain is Transcriptional regulatory protein RcsA, found in Salmonella typhimurium (strain LT2 / SGSC1412 / ATCC 700720).